We begin with the raw amino-acid sequence, 76 residues long: Small ribosomal subunit protein bS18 (76 aa).

Belongs to the bacterial ribosomal protein bS18 family. As to quaternary structure, part of the 30S ribosomal subunit. Forms a tight heterodimer with protein bS6.

In terms of biological role, binds as a heterodimer with protein bS6 to the central domain of the 16S rRNA, where it helps stabilize the platform of the 30S subunit. The polypeptide is Small ribosomal subunit protein bS18 (Oceanobacillus iheyensis (strain DSM 14371 / CIP 107618 / JCM 11309 / KCTC 3954 / HTE831)).